The primary structure comprises 332 residues: Small ribosomal subunit protein uS2 (332 aa).

This sequence belongs to the universal ribosomal protein uS2 family.

The polypeptide is Small ribosomal subunit protein uS2 (Nitrobacter hamburgensis (strain DSM 10229 / NCIMB 13809 / X14)).